Reading from the N-terminus, the 433-residue chain is Alpha-(1,3)-fucosyltransferase fut-1 (433 aa).

The Cytoplasmic segment spans residues 1–12; sequence MTARSIKLFFAR. Residues 13–32 traverse the membrane as a helical; Signal-anchor for type II membrane protein segment; that stretch reads WKYLMFACCITYLLVIYAPI. The Lumenal segment spans residues 33–433; it reads SKSEQKDWKE…GTLVDSIPLD (401 aa). 2 N-linked (GlcNAc...) asparagine glycosylation sites follow: asparagine 194 and asparagine 359.

This sequence belongs to the glycosyltransferase 10 family. The cofactor is Mg(2+). It depends on Mn(2+) as a cofactor. Post-translationally, N-glycosylated. Glycosylation is important for enzymatic activity. In terms of tissue distribution, expressed in the pharyngeal-intestinal (PI) and anal valves. Expressed in ASG neurons and in one or two neurons in the retrovesicular ganglion and two neurons posterior to the PI valve and PHA and PHB neurons in the tail.

Its subcellular location is the golgi apparatus. The protein resides in the golgi stack membrane. The enzyme catalyses N(4)-{beta-D-GlcNAc-(1-&gt;2)-alpha-D-Man-(1-&gt;3)-[beta-D-GlcNAc-(1-&gt;2)-alpha-D-Man-(1-&gt;6)]-beta-D-Man-(1-&gt;4)-beta-D-GlcNAc-(1-&gt;4)-beta-D-GlcNAc}-L-asparaginyl-[protein] + GDP-beta-L-fucose = N(4)-{beta-D-GlcNAc-(1-&gt;2)-alpha-D-Man-(1-&gt;3)-[beta-D-GlcNAc-(1-&gt;2)-alpha-D-Man-(1-&gt;6)]-beta-D-Man-(1-&gt;4)-beta-D-GlcNAc-(1-&gt;4)-[alpha-L-Fuc(1-&gt;3)]-beta-D-GlcNAc}-L-asparaginyl-[protein] + GDP + H(+). Its pathway is protein modification; protein glycosylation. Inhibited by Cu(2+) or Zn(2+) and to a lesser extent Ni(2+) ions. In terms of biological role, preferentially catalyzes the addition of fucose in alpha 1-3 linkage to the first GlcNAc residue (with or without alpha 1,6-linked fucose), next to the peptide chains in N-glycans. Unlike in mammals, does not require the prior action of N-acetylglucosaminyltransferase I to generate complex N-glycans. The polypeptide is Alpha-(1,3)-fucosyltransferase fut-1 (Caenorhabditis elegans).